A 634-amino-acid chain; its full sequence is DNA-directed RNA polymerase subunit gamma (634 aa).

Positions 74, 76, 89, and 92 each coordinate Zn(2+). The Mg(2+) site is built by aspartate 471, aspartate 473, and aspartate 475.

It belongs to the RNA polymerase beta' chain family. RpoC1 subfamily. As to quaternary structure, in cyanobacteria the RNAP catalytic core is composed of 2 alpha, 1 beta, 1 beta', 1 gamma and 1 omega subunit. When a sigma factor is associated with the core the holoenzyme is formed, which can initiate transcription. Mg(2+) is required as a cofactor. Requires Zn(2+) as cofactor.

The catalysed reaction is RNA(n) + a ribonucleoside 5'-triphosphate = RNA(n+1) + diphosphate. Its function is as follows. DNA-dependent RNA polymerase catalyzes the transcription of DNA into RNA using the four ribonucleoside triphosphates as substrates. In Prochlorococcus marinus (strain MIT 9303), this protein is DNA-directed RNA polymerase subunit gamma.